We begin with the raw amino-acid sequence, 781 residues long: Tax1-binding protein 1 homolog A (781 aa).

Coiled-coil stretches lie at residues 148-453 (NSDI…QGDA) and 488-581 (DVEK…YMRE). Positions 441 to 465 (KLTQQQETQQGDANRNDASTETTLE) are enriched in polar residues. Disordered stretches follow at residues 441 to 510 (KLTQ…EEEC) and 630 to 691 (ETRD…EAPA). Residues 484 to 495 (TVARDVEKSRDE) show a composition bias toward basic and acidic residues. Acidic residues predominate over residues 496–510 (EGNEQEEEDEEEEEC). Pro residues predominate over residues 646–656 (RPPPLAPPPWG). 2 consecutive UBZ1-type zinc fingers follow at residues 716-742 (HKQC…VESH) and 743-769 (WRVC…VHTH). Zn(2+) is bound by residues cysteine 719, cysteine 722, histidine 738, histidine 742, cysteine 746, cysteine 749, histidine 765, and histidine 769.

Little expression is observed during pectoral fin development, except for an elevated level of expression in the distal mesenchyme cells of some samples.

Its function is as follows. May have anti-apoptotic activity. This chain is Tax1-binding protein 1 homolog A, found in Danio rerio (Zebrafish).